Here is an 87-residue protein sequence, read N- to C-terminus: Small ribosomal subunit protein bS20 (87 aa).

Positions 1 to 22 are disordered; sequence MANIKSQIKRNKTNEKARLRNQ.

The protein belongs to the bacterial ribosomal protein bS20 family.

Functionally, binds directly to 16S ribosomal RNA. In Corynebacterium glutamicum (strain R), this protein is Small ribosomal subunit protein bS20.